The chain runs to 60 residues: Light-harvesting polypeptide B-885 alpha-2 chain (60 aa).

Over 1 to 16 (SAPAQWKLWLVMDPRT) the chain is Cytoplasmic. A helical transmembrane segment spans residues 17–37 (VMIGTAAWLGVLALLIHFLLL). His33 contributes to the a bacteriochlorophyll binding site. Over 38–60 (GTERFNWIDTGLKEQKATAAAQA) the chain is Periplasmic.

This sequence belongs to the antenna complex alpha subunit family. In terms of assembly, the core complex is formed by different alpha and beta chains, binding bacteriochlorophyll molecules, and arranged most probably in tetrameric structures disposed around the reaction center. The non-pigmented gamma chains may constitute additional components.

It is found in the cell inner membrane. Functionally, antenna complexes are light-harvesting systems, which transfer the excitation energy to the reaction centers. The chain is Light-harvesting polypeptide B-885 alpha-2 chain from Rhodocyclus tenuis (Rhodospirillum tenue).